Consider the following 555-residue polypeptide: Spermine oxidase (555 aa).

FAD contacts are provided by residues Ala-35, Glu-55, Arg-63, 79 to 80 (TW), and Val-261. The interval 271–306 (ARPRGPEIEPRGEGDHNHDTGEGGQGGEEPRGGRWD) is disordered. A compositionally biased stretch (basic and acidic residues) spans 274–291 (RGPEIEPRGEGDHNHDTG). FAD is bound by residues Glu-519 and 528-529 (TT).

This sequence belongs to the flavin monoamine oxidase family. The cofactor is FAD. Widely expressed. Expressed in human tumor cell lines. Isoform 4 is only found in an embryonal kidney cell line.

It is found in the cytoplasm. The protein localises to the nucleus. The catalysed reaction is spermine + O2 + H2O = 3-aminopropanal + spermidine + H2O2. The protein operates within amine and polyamine degradation; spermine degradation. Its activity is regulated as follows. Inhibited at more than 90% by SL-11144, SL-11150 and SL-11158, at concentrations less than 1 uM. In terms of biological role, flavoenzyme which catalyzes the oxidation of spermine to spermidine. Can also use N(1)-acetylspermine and spermidine as substrates, with different affinity depending on the isoform (isozyme) and on the experimental conditions. Plays an important role in the regulation of polyamine intracellular concentration and has the potential to act as a determinant of cellular sensitivity to the antitumor polyamine analogs. May contribute to beta-alanine production via aldehyde dehydrogenase conversion of 3-amino-propanal. This is Spermine oxidase (SMOX) from Homo sapiens (Human).